A 642-amino-acid chain; its full sequence is Threonine--tRNA ligase (642 aa).

In terms of domain architecture, TGS spans 1 to 61; the sequence is MPVITLPDGS…VDDASVAIIT (61 aa). The tract at residues 243-534 is catalytic; the sequence is DHRKIGKQLD…LTEEYAGFFP (292 aa). Residues Cys334, His385, and His511 each contribute to the Zn(2+) site.

The protein belongs to the class-II aminoacyl-tRNA synthetase family. In terms of assembly, homodimer. Zn(2+) serves as cofactor.

The protein resides in the cytoplasm. It carries out the reaction tRNA(Thr) + L-threonine + ATP = L-threonyl-tRNA(Thr) + AMP + diphosphate + H(+). Catalyzes the attachment of threonine to tRNA(Thr) in a two-step reaction: L-threonine is first activated by ATP to form Thr-AMP and then transferred to the acceptor end of tRNA(Thr). Also edits incorrectly charged L-seryl-tRNA(Thr). In Erwinia tasmaniensis (strain DSM 17950 / CFBP 7177 / CIP 109463 / NCPPB 4357 / Et1/99), this protein is Threonine--tRNA ligase.